The following is a 200-amino-acid chain: Guanylate kinase (200 aa).

One can recognise a Guanylate kinase-like domain in the interval 6-184 (GLLIVLSGPS…AVDKLKSILL (179 aa)). 13–20 (GPSGAGKG) is a binding site for ATP.

The protein belongs to the guanylate kinase family.

The protein localises to the cytoplasm. It carries out the reaction GMP + ATP = GDP + ADP. Essential for recycling GMP and indirectly, cGMP. The sequence is that of Guanylate kinase from Desulfitobacterium hafniense (strain Y51).